Here is a 312-residue protein sequence, read N- to C-terminus: Probable HTH-type transcriptional regulator LrhA (312 aa).

Residues 11-68 form the HTH lysR-type domain; sequence LDLDLLRTFVAVADLNTFAAAAAAVCRTQSAVSQQMQRLEQLVGKELFARHGRNKLLT. The segment at residues 28–47 is a DNA-binding region (H-T-H motif); sequence FAAAAAAVCRTQSAVSQQMQ.

The protein belongs to the LysR transcriptional regulatory family.

Functionally, not known, does not seem to act on the proton translocating NADH dehydrogenase genes (nuoA-N) which are part of the lrhA operon. In Escherichia coli (strain K12), this protein is Probable HTH-type transcriptional regulator LrhA (lrhA).